The primary structure comprises 117 residues: Protein Rev (117 aa).

S5 and S8 each carry phosphoserine; by host CK2. Positions 18–26 are homomultimerization; that stretch reads LIKILYQSN. Residues 24–49 are disordered; it reads QSNPPPNTEGTTRQARRNRRRRWRAR. Residues 35-51 carry the Nuclear localization signal and RNA-binding (RRE) motif; that stretch reads TRQARRNRRRRWRARQR. The segment covering 37-49 has biased composition (basic residues); sequence QARRNRRRRWRAR. The Nuclear export signal and binding to XPO1 motif lies at 74–85; that stretch reads LQLPPLERLTLN. A phosphoserine; by host mark is found at S93 and S100. Over residues 93-105 the composition is skewed to polar residues; that stretch reads SGTQGVGSPQISV. The disordered stretch occupies residues 93–117; the sequence is SGTQGVGSPQISVESPAILGSGTEE.

This sequence belongs to the HIV-1 REV protein family. In terms of assembly, homomultimer; when bound to the RRE. Multimeric assembly is essential for activity and may involve XPO1. Binds to human KPNB1, XPO1, TNPO1, RANBP5 and IPO7. Interacts with the viral Integrase. Interacts with human KHDRBS1. Interacts with human NAP1; this interaction decreases Rev multimerization and stimulates its activity. Interacts with human DEAD-box helicases DDX3 and DDX24; these interactions may serve for viral RNA export to the cytoplasm and packaging, respectively. Interacts with human PSIP1; this interaction may inhibit HIV-1 DNA integration by promoting dissociation of the Integrase-LEDGF/p75 complex. Asymmetrically arginine dimethylated at one site by host PRMT6. Methylation impairs the RNA-binding activity and export of viral RNA from the nucleus to the cytoplasm. Post-translationally, phosphorylated by protein kinase CK2. Presence of, and maybe binding to the N-terminus of the regulatory beta subunit of CK2 is necessary for CK2-mediated Rev's phosphorylation.

It is found in the host nucleus. The protein resides in the host nucleolus. Its subcellular location is the host cytoplasm. Its function is as follows. Escorts unspliced or incompletely spliced viral pre-mRNAs (late transcripts) out of the nucleus of infected cells. These pre-mRNAs carry a recognition sequence called Rev responsive element (RRE) located in the env gene, that is not present in fully spliced viral mRNAs (early transcripts). This function is essential since most viral proteins are translated from unspliced or partially spliced pre-mRNAs which cannot exit the nucleus by the pathway used by fully processed cellular mRNAs. Rev itself is translated from a fully spliced mRNA that readily exits the nucleus. Rev's nuclear localization signal (NLS) binds directly to KPNB1/Importin beta-1 without previous binding to KPNA1/Importin alpha-1. KPNB1 binds to the GDP bound form of RAN (Ran-GDP) and targets Rev to the nucleus. In the nucleus, the conversion from Ran-GDP to Ran-GTP dissociates Rev from KPNB1 and allows Rev's binding to the RRE in viral pre-mRNAs. Rev multimerization on the RRE via cooperative assembly exposes its nuclear export signal (NES) to the surface. Rev can then form a complex with XPO1/CRM1 and Ran-GTP, leading to nuclear export of the complex. Conversion from Ran-GTP to Ran-GDP mediates dissociation of the Rev/RRE/XPO1/RAN complex, so that Rev can return to the nucleus for a subsequent round of export. Beside KPNB1, also seems to interact with TNPO1/Transportin-1, RANBP5/IPO5 and IPO7/RANBP7 for nuclear import. The nucleoporin-like HRB/RIP is an essential cofactor that probably indirectly interacts with Rev to release HIV RNAs from the perinuclear region to the cytoplasm. This is Protein Rev from Human immunodeficiency virus type 1 group M subtype A (isolate MAL) (HIV-1).